The following is an 84-amino-acid chain: MVTIRLARGGAKKAPFYHIVVTDSRSPRDSGYIEQLGYFNPVARGQEVRLHMNQERIEHWVSKGAQTSERVGKLLADFRKQNQA.

This sequence belongs to the bacterial ribosomal protein bS16 family.

This is Small ribosomal subunit protein bS16 from Thioalkalivibrio sulfidiphilus (strain HL-EbGR7).